Consider the following 484-residue polypeptide: MKFIVKLFPEIMMKSKPVRMRFTKMLETNIRNVLKKVDETAKVQRQWDKIMVMVPDDRPDLVEAFAERLACIPGIAHVLQVNVSTFTTVDDIYQQTLVAYKEQLAGKTFCVRVKRAGKHDFNSIEVERYVGGGLNQFTEAAGVRLKNPDMTVHLEIDNDNLYLIDKRIEGLGGFPMATQEDVLSLISGGFDSGVSSYQFIKRGSRTHYCFFNLGGDQHEIGVKQVAYHLWQKYGESHKVKFISVPFDPVVQEILERIDNGQMGVILKRMMMRAATRVAQKMGIQALVTGEAMGQVSSQTLTNLNVIDRCTEQLILRPLIAMDKQDIINISRQIGTEDFAKSIPEYCGVISQKPTVKAVLAKVEAEEAKFSEDLLDRVIADAEIIDIKEIATQMDTKITATETVDAISAGEIIIDVRAPEEEEKSPLELDGVEVKAIPFFKLATQFADLDKEKNYLLYCDRGVMSKLQALYLQEQGYNNVKVYRP.

One can recognise a THUMP domain in the interval 63-167; the sequence is EAFAERLACI…NDNLYLIDKR (105 aa). Residues 185–186, K267, G289, and Q298 each bind ATP; that span reads LI. C346 and C458 are joined by a disulfide. A Rhodanese domain is found at 406–484; that stretch reads ISAGEIIIDV…GYNNVKVYRP (79 aa). C458 acts as the Cysteine persulfide intermediate in catalysis.

It belongs to the ThiI family.

It is found in the cytoplasm. It catalyses the reaction [ThiI sulfur-carrier protein]-S-sulfanyl-L-cysteine + a uridine in tRNA + 2 reduced [2Fe-2S]-[ferredoxin] + ATP + H(+) = [ThiI sulfur-carrier protein]-L-cysteine + a 4-thiouridine in tRNA + 2 oxidized [2Fe-2S]-[ferredoxin] + AMP + diphosphate. The enzyme catalyses [ThiS sulfur-carrier protein]-C-terminal Gly-Gly-AMP + S-sulfanyl-L-cysteinyl-[cysteine desulfurase] + AH2 = [ThiS sulfur-carrier protein]-C-terminal-Gly-aminoethanethioate + L-cysteinyl-[cysteine desulfurase] + A + AMP + 2 H(+). Its pathway is cofactor biosynthesis; thiamine diphosphate biosynthesis. Its function is as follows. Catalyzes the ATP-dependent transfer of a sulfur to tRNA to produce 4-thiouridine in position 8 of tRNAs, which functions as a near-UV photosensor. Also catalyzes the transfer of sulfur to the sulfur carrier protein ThiS, forming ThiS-thiocarboxylate. This is a step in the synthesis of thiazole, in the thiamine biosynthesis pathway. The sulfur is donated as persulfide by IscS. The polypeptide is tRNA sulfurtransferase (Shewanella pealeana (strain ATCC 700345 / ANG-SQ1)).